Reading from the N-terminus, the 912-residue chain is Protein translocase subunit SecA (912 aa).

ATP contacts are provided by residues glutamine 87, 105-109, and aspartate 508; that span reads GEGKT. Residues 864–912 form a disordered region; the sequence is AEEEVEQMQGGNAPVPVSQVTRDEPKVGRNDPCPCGSGKKYKHCHGQLS. Residues cysteine 896, cysteine 898, cysteine 907, and histidine 908 each coordinate Zn(2+). The span at 902–912 shows a compositional bias: basic residues; it reads KKYKHCHGQLS.

The protein belongs to the SecA family. Monomer and homodimer. Part of the essential Sec protein translocation apparatus which comprises SecA, SecYEG and auxiliary proteins SecDF-YajC and YidC. The cofactor is Zn(2+).

The protein resides in the cell inner membrane. It localises to the cytoplasm. The enzyme catalyses ATP + H2O + cellular proteinSide 1 = ADP + phosphate + cellular proteinSide 2.. Part of the Sec protein translocase complex. Interacts with the SecYEG preprotein conducting channel. Has a central role in coupling the hydrolysis of ATP to the transfer of proteins into and across the cell membrane, serving both as a receptor for the preprotein-SecB complex and as an ATP-driven molecular motor driving the stepwise translocation of polypeptide chains across the membrane. In Xanthomonas euvesicatoria pv. vesicatoria (strain 85-10) (Xanthomonas campestris pv. vesicatoria), this protein is Protein translocase subunit SecA.